Consider the following 513-residue polypeptide: Carboxyethyl-arginine beta-lactam-synthase (513 aa).

Mg(2+)-binding residues include Asp253 and Asp351.

The protein belongs to the asparagine synthetase family. Homodimer. The cofactor is Mg(2+).

The catalysed reaction is N(2)-(2-carboxyethyl)-L-arginine + ATP = deoxyamidinoproclavaminate + AMP + diphosphate + H(+). It functions in the pathway antibiotic biosynthesis; clavulanate biosynthesis; clavulanate from D-glyceraldehyde 3-phosphate and L-arginine: step 2/8. The polypeptide is Carboxyethyl-arginine beta-lactam-synthase (bls) (Streptomyces clavuligerus).